We begin with the raw amino-acid sequence, 615 residues long: DNA mismatch repair protein MutL (615 aa).

The segment at 363 to 397 (FAEPAVREPVAPRYTPAPASGSRPAAPWPNAQPGY) is disordered. Residues 378–391 (PAPASGSRPAAPWP) are compositionally biased toward low complexity.

Belongs to the DNA mismatch repair MutL/HexB family.

Functionally, this protein is involved in the repair of mismatches in DNA. It is required for dam-dependent methyl-directed DNA mismatch repair. May act as a 'molecular matchmaker', a protein that promotes the formation of a stable complex between two or more DNA-binding proteins in an ATP-dependent manner without itself being part of a final effector complex. The protein is DNA mismatch repair protein MutL of Escherichia coli O157:H7 (strain EC4115 / EHEC).